The sequence spans 820 residues: Leucine--tRNA ligase (820 aa).

Positions 42-52 match the 'HIGH' region motif; the sequence is PYPSGDLHMGH. The 'KMSKS' region signature appears at 576 to 580; that stretch reads KMSKS. Residue Lys579 coordinates ATP.

It belongs to the class-I aminoacyl-tRNA synthetase family.

It localises to the cytoplasm. It catalyses the reaction tRNA(Leu) + L-leucine + ATP = L-leucyl-tRNA(Leu) + AMP + diphosphate. This is Leucine--tRNA ligase from Coxiella burnetii (strain CbuG_Q212) (Coxiella burnetii (strain Q212)).